A 158-amino-acid polypeptide reads, in one-letter code: Disulfide bond formation protein B (158 aa).

Residues 1–7 (MKNSRPV) lie on the Cytoplasmic side of the membrane. The helical transmembrane segment at 8 to 24 (LFAVALASLLLLAVALY) threads the bilayer. Topologically, residues 25-42 (LQHVENMLPCPLCVIQRY) are periplasmic. Residues Cys-34 and Cys-37 are joined by a disulfide bond. A helical transmembrane segment spans residues 43–57 (AFAAIALICLVTAFR). At 58 to 63 (TEVTAR) the chain is on the cytoplasmic side. The helical transmembrane segment at 64–81 (IGAALAALASLAGAGVAG) threads the bilayer. At 82-136 (WHIYIKAHPTVSCGIDPLETSLNTIPTAKLLPFLLQADGLCTTEYAPIMGLSIPQ) the chain is on the periplasmic side. A disulfide bond links Cys-94 and Cys-122. Residues 137 to 155 (WALVWFIVIALFLLHTAFR) traverse the membrane as a helical segment. Residues 156–158 (KKS) are Cytoplasmic-facing.

It belongs to the DsbB family.

The protein resides in the cell inner membrane. In terms of biological role, required for disulfide bond formation in some periplasmic proteins. Acts by oxidizing the DsbA protein. This chain is Disulfide bond formation protein B, found in Herminiimonas arsenicoxydans.